The primary structure comprises 143 residues: Competence protein ComGD (143 aa).

The propeptide occupies 1–10; that stretch reads MNIKLNEEKG. Position 11 is an N-methylphenylalanine (Phe-11). A helical membrane pass occupies residues 11-31; that stretch reads FTLLESLLVLSLASILLVAVF.

In terms of assembly, the transformation pili are flexible filaments, consisting mainly of the major pilin ComGC and smaller amounts of the minor pilins, including at least ComGD, ComGF and ComGG. Interacts with ComGF. Interacts with ComGG. Post-translationally, processing of ComGD in competent cells requires ComC.

It localises to the cell membrane. The protein resides in the cell surface. Functionally, required for formation of the type IV-like pilus (T4P) that plays a role in transformation. Transformation pili are dynamically extended and retracted, perhaps thereby promoting DNA uptake and transformation. Required for transformation and DNA binding. This chain is Competence protein ComGD (comGD), found in Bacillus subtilis (strain 168).